A 200-amino-acid chain; its full sequence is MKYLHTICLLFIFVARGNSRSCDFCHNIGKDCDGYEEECSSPEDVCGKVLLEISSASLSVRTVHKNCFSSSICKLGQFDVNIGHHSYIRGRINCCEKELCEDQPFPGLPLSKPNGYYCPGAIGLFTKDSTEYEAICKGTETKCINIVGHRYEQFPGDISYNLKGCVSSCPLLSLSNATFEQNRNYLEKVECKDAIRLASL.

The first 19 residues, 1-19 (MKYLHTICLLFIFVARGNS), serve as a signal peptide directing secretion. 8 disulfide bridges follow: Cys-22/Cys-46, Cys-25/Cys-32, Cys-39/Cys-67, Cys-73/Cys-94, Cys-95/Cys-100, Cys-118/Cys-143, Cys-136/Cys-165, and Cys-169/Cys-191. A glycan (N-linked (GlcNAc...) asparagine; partial) is linked at Asn-176.

As to quaternary structure, occurs as a mixture of oligomers. Tetrameric arrangement appears to be the predominant quaternary structure. Interacts with phospholipase A2 crotoxin basic subunit CBd; the interaction leads to dissociation of the CA-CB heterodimer and to inhibition of PLA2 activity of the CB subunit. Post-translationally, the carbohydrate moiety increases the inhibition capacity of CNF, but is not essential for activity and for oligomerization. Expressed by the liver.

The protein localises to the secreted. Inhibits the PLA2 activity of crotoxin (CTX) by replacing the acid subunit (CA) in the CTX complex. Displays a pro-inflammatory action through activation of important main signaling pathways for human leukocytes, in vitro. Abolishes both the muscle-paralyzing and muscle-damaging activities of CTX in mice phrenic nerve-diaphragm muscle preparations. The protein is Phospholipase A2 inhibitor CNF of Crotalus durissus terrificus (South American rattlesnake).